A 138-amino-acid chain; its full sequence is Basic phospholipase A2 DAV-N6 (138 aa).

Residues 1–16 (MRTLWIVAVLLVSVEG) form the signal peptide. 7 cysteine pairs are disulfide-bonded: C42–C131, C44–C60, C59–C111, C65–C138, C66–C104, C73–C97, and C91–C102. Ca(2+)-binding residues include Y43, G45, and G47. Residue H63 is part of the active site. D64 serves as a coordination point for Ca(2+). The active site involves D105.

It depends on Ca(2+) as a cofactor. Expressed by the venom gland.

The protein localises to the secreted. It catalyses the reaction a 1,2-diacyl-sn-glycero-3-phosphocholine + H2O = a 1-acyl-sn-glycero-3-phosphocholine + a fatty acid + H(+). In terms of biological role, snake venom phospholipase A2 (PLA2) that inhibits neuromuscular transmission by blocking acetylcholine release from the nerve termini. PLA2 catalyzes the calcium-dependent hydrolysis of the 2-acyl groups in 3-sn-phosphoglycerides. This is Basic phospholipase A2 DAV-N6 from Deinagkistrodon acutus (Hundred-pace snake).